Here is a 284-residue protein sequence, read N- to C-terminus: NAD kinase (284 aa).

Aspartate 60 acts as the Proton acceptor in catalysis. Residues 60–61 (DG), 134–135 (ND), lysine 145, arginine 162, aspartate 164, and glutamine 235 each bind NAD(+).

This sequence belongs to the NAD kinase family. A divalent metal cation serves as cofactor.

The protein resides in the cytoplasm. The catalysed reaction is NAD(+) + ATP = ADP + NADP(+) + H(+). Involved in the regulation of the intracellular balance of NAD and NADP, and is a key enzyme in the biosynthesis of NADP. Catalyzes specifically the phosphorylation on 2'-hydroxyl of the adenosine moiety of NAD to yield NADP. The sequence is that of NAD kinase from Treponema denticola (strain ATCC 35405 / DSM 14222 / CIP 103919 / JCM 8153 / KCTC 15104).